The chain runs to 1048 residues: 3-hydroxy-3-methylglutaryl-coenzyme A reductase (1048 aa).

Residues Met1–Pro32 are Cytoplasmic-facing. Residues Ile33–Gly53 traverse the membrane as a helical segment. Residues Thr54–Thr220 are Lumenal-facing. Residues Val221–Phe241 traverse the membrane as a helical segment. Residues Asp222 to Val403 enclose the SSD domain. At Arg242–Arg250 the chain is on the cytoplasmic side. A helical transmembrane segment spans residues Phe251 to Ile271. Residues Thr272–Asp276 are Lumenal-facing. Residues Val277–Phe297 form a helical membrane-spanning segment. Residues Glu298 to Glu348 lie on the Cytoplasmic side of the membrane. A helical transmembrane segment spans residues Gly349–Leu369. The Lumenal portion of the chain corresponds to Arg370–His377. N-linked (GlcNAc...) asparagine glycosylation occurs at Asn372. A helical membrane pass occupies residues Phe378–Ala398. At Thr399–Trp439 the chain is on the cytoplasmic side. The helical transmembrane segment at Trp440–Phe460 threads the bilayer. Over Tyr461 to Arg542 the chain is Lumenal. N-linked (GlcNAc...) asparagine glycosylation is found at Asn470 and Asn520. A helical transmembrane segment spans residues Leu543–Ala563. The Cytoplasmic segment spans residues Arg564 to Lys1048. Catalysis depends on Glu729, which acts as the Charge relay system. Residue Ser735–Lys741 participates in CoA binding. Residues Ser796–Phe798 and Asp823–Ser831 contribute to the NADP(+) site. The Charge relay system role is filled by Lys863. Val892–Lys894 provides a ligand contact to CoA. Asp939 (charge relay system) is an active-site residue. Ala1034 to His1035 is a binding site for CoA. His1035 functions as the Proton donor in the catalytic mechanism. Asn1039–Arg1040 contacts NADP(+).

The protein belongs to the HMG-CoA reductase family.

The protein resides in the endoplasmic reticulum membrane. It carries out the reaction (R)-mevalonate + 2 NADP(+) + CoA = (3S)-3-hydroxy-3-methylglutaryl-CoA + 2 NADPH + 2 H(+). It functions in the pathway metabolic intermediate biosynthesis; (R)-mevalonate biosynthesis; (R)-mevalonate from acetyl-CoA: step 3/3. HMG-CoA reductase; part of the first module of ergosterol biosynthesis pathway that includes the early steps of the pathway, conserved across all eukaryotes, and which results in the formation of mevalonate from acetyl-coenzyme A (acetyl-CoA). In this module, the cytosolic acetyl-CoA acetyltransferase catalyzes the formation of acetoacetyl-CoA. The hydroxymethylglutaryl-CoA synthase then condenses acetyl-CoA with acetoacetyl-CoA to form HMG-CoA. The rate-limiting step of the early module is the reduction to mevalonate by the 3-hydroxy-3-methylglutaryl-coenzyme A (HMG-CoA) reductase. The sequence is that of 3-hydroxy-3-methylglutaryl-coenzyme A reductase from Aspergillus terreus (strain NIH 2624 / FGSC A1156).